A 686-amino-acid chain; its full sequence is Proprotein convertase subtilisin/kexin type 9 (686 aa).

Residues 1 to 28 (MGTVSSRRLWWPLPLLLLLLLGPAGTRA) form the signal peptide. The propeptide occupies 29-150 (QEDDDDDYEE…IEEDSSVFAQ (122 aa)). Tyr36 carries the post-translational modification Sulfotyrosine. Position 45 is a phosphoserine (Ser45). In terms of domain architecture, Inhibitor I9 spans 75–147 (TYVVVLKEET…VDYIEEDSSV (73 aa)). The Peptidase S8 domain occupies 153–459 (PWNLERITPA…GWQLFCRTVW (307 aa)). Residues Asp184 and His224 each act as charge relay system in the active site. 2 disulfides stabilise this stretch: Cys221–Cys253 and Cys321–Cys356. Catalysis depends on Ser384, which acts as the Charge relay system. The segment at 448-686 (GEGWQLFCRT…CRSQHLAQAS (239 aa)) is C-terminal domain. 3 disulfides stabilise this stretch: Cys455–Cys525, Cys475–Cys524, and Cys484–Cys507. The N-linked (GlcNAc...) asparagine glycan is linked to Asn531. Disulfide bonds link Cys532-Cys599, Cys550-Cys598, Cys560-Cys586, Cys606-Cys677, Cys624-Cys676, and Cys633-Cys652. Ser686 is subject to Phosphoserine.

It belongs to the peptidase S8 family. In terms of assembly, monomer. Can self-associate to form dimers and higher multimers which may have increased LDLR degrading activity. The precursor protein but not the mature protein may form multimers. Interacts with APOB, VLDLR, LRP8/APOER2 and BACE1. The full-length immature form (pro-PCSK9) interacts with SCNN1A, SCNN1B and SCNN1G. The pro-PCSK9 form (via C-terminal domain) interacts with LDLR. Interacts (via the C-terminal domain) with ANXA2 (via repeat Annexin 1); the interaction inhibits the degradation of LDLR. Ca(2+) serves as cofactor. In terms of processing, cleavage by furin and PCSK5 generates a truncated inactive protein that is unable to induce LDLR degradation. Undergoes autocatalytic cleavage in the endoplasmic reticulum to release the propeptide from the N-terminus and the cleavage of the propeptide is strictly required for its maturation and activation. The cleaved propeptide however remains associated with the catalytic domain through non-covalent interactions, preventing potential substrates from accessing its active site. As a result, it is secreted from cells as a propeptide-containing, enzymatically inactive protein. Post-translationally, phosphorylation protects the propeptide against proteolysis.

It is found in the cytoplasm. Its subcellular location is the secreted. It localises to the endosome. The protein resides in the lysosome. The protein localises to the cell surface. It is found in the endoplasmic reticulum. Its subcellular location is the golgi apparatus. Its activity is regulated as follows. Its proteolytic activity is autoinhibited by the non-covalent binding of the propeptide to the catalytic domain. Inhibited by EGTA. Functionally, crucial player in the regulation of plasma cholesterol homeostasis. Binds to low-density lipid receptor family members: low density lipoprotein receptor (LDLR), very low density lipoprotein receptor (VLDLR), apolipoprotein E receptor (LRP1/APOER) and apolipoprotein receptor 2 (LRP8/APOER2), and promotes their degradation in intracellular acidic compartments. Acts via a non-proteolytic mechanism to enhance the degradation of the hepatic LDLR through a clathrin LDLRAP1/ARH-mediated pathway. May prevent the recycling of LDLR from endosomes to the cell surface or direct it to lysosomes for degradation. Can induce ubiquitination of LDLR leading to its subsequent degradation. Inhibits intracellular degradation of APOB via the autophagosome/lysosome pathway in a LDLR-independent manner. Involved in the disposal of non-acetylated intermediates of BACE1 in the early secretory pathway. Inhibits epithelial Na(+) channel (ENaC)-mediated Na(+) absorption by reducing ENaC surface expression primarily by increasing its proteasomal degradation. Regulates neuronal apoptosis via modulation of LRP8/APOER2 levels and related anti-apoptotic signaling pathways. This is Proprotein convertase subtilisin/kexin type 9 (PCSK9) from Saguinus labiatus (Red-chested mustached tamarin).